The primary structure comprises 697 residues: DNA ligase (697 aa).

NAD(+) is bound by residues 36–40 (DAEYD), 85–86 (SL), and glutamate 123. The active-site N6-AMP-lysine intermediate is lysine 125. The NAD(+) site is built by arginine 146, glutamate 182, lysine 320, and lysine 344. Zn(2+) is bound by residues cysteine 438, cysteine 441, cysteine 456, and cysteine 462. The region spanning 619-697 (PQGNTLAGKT…EDGLKALLGV (79 aa)) is the BRCT domain.

It belongs to the NAD-dependent DNA ligase family. LigA subfamily. Mg(2+) serves as cofactor. Mn(2+) is required as a cofactor.

The enzyme catalyses NAD(+) + (deoxyribonucleotide)n-3'-hydroxyl + 5'-phospho-(deoxyribonucleotide)m = (deoxyribonucleotide)n+m + AMP + beta-nicotinamide D-nucleotide.. DNA ligase that catalyzes the formation of phosphodiester linkages between 5'-phosphoryl and 3'-hydroxyl groups in double-stranded DNA using NAD as a coenzyme and as the energy source for the reaction. It is essential for DNA replication and repair of damaged DNA. In Bordetella petrii (strain ATCC BAA-461 / DSM 12804 / CCUG 43448), this protein is DNA ligase.